A 177-amino-acid chain; its full sequence is uncharacterized protein (177 aa).

It to B.subtilis YutG.

This is an uncharacterized protein from Bacillus subtilis (strain 168).